A 169-amino-acid polypeptide reads, in one-letter code: Ureidoglycolate lyase (169 aa).

This sequence belongs to the ureidoglycolate lyase family. Homodimer. The cofactor is Ni(2+).

The enzyme catalyses (S)-ureidoglycolate = urea + glyoxylate. The protein operates within nitrogen metabolism; (S)-allantoin degradation. In terms of biological role, catalyzes the catabolism of the allantoin degradation intermediate (S)-ureidoglycolate, generating urea and glyoxylate. Involved in the utilization of allantoin as nitrogen source. The polypeptide is Ureidoglycolate lyase (Pseudomonas paraeruginosa (strain DSM 24068 / PA7) (Pseudomonas aeruginosa (strain PA7))).